We begin with the raw amino-acid sequence, 305 residues long: tRNA dimethylallyltransferase (305 aa).

8 to 15 contributes to the ATP binding site; the sequence is GPTAVGKT. 10–15 contributes to the substrate binding site; the sequence is TAVGKT. Residues 33–36 form an interaction with substrate tRNA region; it reads DSRQ.

Belongs to the IPP transferase family. Monomer. Requires Mg(2+) as cofactor.

The catalysed reaction is adenosine(37) in tRNA + dimethylallyl diphosphate = N(6)-dimethylallyladenosine(37) in tRNA + diphosphate. In terms of biological role, catalyzes the transfer of a dimethylallyl group onto the adenine at position 37 in tRNAs that read codons beginning with uridine, leading to the formation of N6-(dimethylallyl)adenosine (i(6)A). The protein is tRNA dimethylallyltransferase of Thermotoga maritima (strain ATCC 43589 / DSM 3109 / JCM 10099 / NBRC 100826 / MSB8).